A 357-amino-acid polypeptide reads, in one-letter code: D-alanine--D-alanine ligase A (357 aa).

Positions 143–348 (KRLLREAGLA…YSKVIDVLIE (206 aa)) constitute an ATP-grasp domain. 171-226 (AGALGLPFFAKPARQGSSFGVSKVHDRDGFEQAVETALRYDSKALIEEFVDGREIE) is a binding site for ATP. 3 residues coordinate Mg(2+): D302, E315, and N317.

Belongs to the D-alanine--D-alanine ligase family. It depends on Mg(2+) as a cofactor. Mn(2+) is required as a cofactor.

It localises to the cytoplasm. The catalysed reaction is 2 D-alanine + ATP = D-alanyl-D-alanine + ADP + phosphate + H(+). The protein operates within cell wall biogenesis; peptidoglycan biosynthesis. Its function is as follows. Cell wall formation. This Mesorhizobium japonicum (strain LMG 29417 / CECT 9101 / MAFF 303099) (Mesorhizobium loti (strain MAFF 303099)) protein is D-alanine--D-alanine ligase A.